A 309-amino-acid polypeptide reads, in one-letter code: UDP-N-acetylenolpyruvoylglucosamine reductase (309 aa).

Positions 25–188 (RVGGPADWLF…TSVTLQGNRE (164 aa)) constitute an FAD-binding PCMH-type domain. The active site involves Arg168. Positions 202–231 (AKRDATQPTKALTAGSTFRNPAGFSSTGQA) are disordered. Residues 207–231 (TQPTKALTAGSTFRNPAGFSSTGQA) show a composition bias toward polar residues. Catalysis depends on Ser217, which acts as the Proton donor. The active site involves Glu299.

The protein belongs to the MurB family. Requires FAD as cofactor.

It is found in the cytoplasm. The enzyme catalyses UDP-N-acetyl-alpha-D-muramate + NADP(+) = UDP-N-acetyl-3-O-(1-carboxyvinyl)-alpha-D-glucosamine + NADPH + H(+). It participates in cell wall biogenesis; peptidoglycan biosynthesis. Cell wall formation. The polypeptide is UDP-N-acetylenolpyruvoylglucosamine reductase (Jannaschia sp. (strain CCS1)).